Here is a 289-residue protein sequence, read N- to C-terminus: Transcription factor MafA (289 aa).

Over residues 52–73 the composition is skewed to low complexity; the sequence is STPISTPCSSVPSSPSFCAPSP. 2 disordered regions span residues 52-87 and 126-164; these read STPI…PNAA and HHHH…HHHH. The segment covering 74-87 has biased composition (polar residues); it reads GAQSGVNPSNPNAA. Residues 152 to 164 show a composition bias toward basic residues; that stretch reads GHHHQVHHHHHHH. The tract at residues 201 to 226 is basic motif; the sequence is RLKQKRRTLKNRGYAQSCRYKRVQQR. In terms of domain architecture, bZIP spans 201-264; it reads RLKQKRRTLK…DLYKDKYEKL (64 aa). A leucine-zipper region spans residues 229–250; the sequence is LETEKCQLQSQVEQLKQEVSRL. Positions 266–289 are disordered; sequence SRSFTTRESPPQGNPGKANADFFM. Polar residues predominate over residues 267-276; sequence RSFTTRESPP.

It belongs to the bZIP family. Maf subfamily.

The protein resides in the nucleus. Its function is as follows. Transcription factor, possibly involved in transcription regulation during lens development. The chain is Transcription factor MafA (mafa) from Xenopus tropicalis (Western clawed frog).